The chain runs to 521 residues: Membrane-bound transcription factor site-2 protease (521 aa).

The Cytoplasmic segment spans residues 1–3; the sequence is MIP. A helical transmembrane segment spans residues 4–24; sequence VSLVVVVVGGWTVVYLTDLVL. Residues 25-74 are Lumenal-facing; the sequence is KSSVYFKHSYEDWLESNGLSISPFHIRWQTAVFNRAFYSWGRRKARMLYQ. Helical transmembrane passes span 75–95 and 96–107; these read WFNF…FLLG and KTLMQTLAQMMA. The Lumenal segment spans residues 108–146; the sequence is DSPSSYSSSSSSSSSSSSSSSSSSSSSSSSSLHNEQVLQ. The segment at 113–137 is disordered; sequence YSSSSSSSSSSSSSSSSSSSSSSSS. Residues 147 to 171 traverse the membrane as a helical segment; it reads VVVPGINLPVNQLTYFFAAVLISGV. His173 contributes to the Zn(2+) binding site. Glu174 is a catalytic residue. 3 helical membrane-spanning segments follow: residues 176–188, 189–211, and 231–253; these read GHGI…QVRF, NGFG…TTHL, and FVLA…PFYY. Residue His177 coordinates Zn(2+). At 254 to 448 the chain is on the lumenal side; that stretch reads TGVGVLITEV…LPVVVETFVK (195 aa). N-linked (GlcNAc...) asparagine glycosylation is present at Asn339. A run of 2 helical transmembrane segments spans residues 449–466 and 467–478; these read YLIS…VPCF and ALDGQWILNSFL. Over 479–494 the chain is Lumenal; the sequence is DATLTSVIGDNDVKDL. Residues 495–515 form a helical membrane-spanning segment; sequence IGFFILLGGSVLLAANVTLGL. Residues 516–521 are Cytoplasmic-facing; sequence WMVTAR.

The protein belongs to the peptidase M50A family. Zn(2+) serves as cofactor.

The protein localises to the membrane. It is found in the cytoplasm. Its subcellular location is the golgi apparatus membrane. The enzyme catalyses Cleaves several transcription factors that are type-2 transmembrane proteins within membrane-spanning domains. Known substrates include sterol regulatory element-binding protein (SREBP) -1, SREBP-2 and forms of the transcriptional activator ATF6. SREBP-2 is cleaved at the site 477-DRSRILL-|-CVLTFLCLSFNPLTSLLQWGGA-505. The residues Asn-Pro, 11 residues distal to the site of cleavage in the membrane-spanning domain, are important for cleavage by S2P endopeptidase. Replacement of either of these residues does not prevent cleavage, but there is no cleavage if both of these residues are replaced.. Functionally, zinc metalloprotease that mediates intramembrane proteolysis of proteins such as ATF6, ATF6B, SREBF1/SREBP1 and SREBF2/SREBP2. Catalyzes the second step in the proteolytic activation of the sterol regulatory element-binding proteins (SREBPs) SREBF1/SREBP1 and SREBF2/SREBP2: cleaves SREBPs within the first transmembrane segment, thereby releasing the N-terminal segment with a portion of the transmembrane segment attached. Mature N-terminal SREBP fragments shuttle to the nucleus and activate gene transcription. Also mediates the second step in the proteolytic activation of the cyclic AMP-dependent transcription factor ATF-6 (ATF6 and ATF6B). Involved in intramembrane proteolysis during bone formation. In astrocytes and osteoblasts, upon DNA damage and ER stress, mediates the second step of the regulated intramembrane proteolytic activation of the transcription factor CREB3L1, leading to the inhibition of cell-cycle progression. The sequence is that of Membrane-bound transcription factor site-2 protease (MBTPS2) from Pongo abelii (Sumatran orangutan).